Reading from the N-terminus, the 232-residue chain is Protein INAPERTURATE POLLEN 1 homolog (232 aa).

Interacts with LECRKS7/DAF1.

The protein localises to the cytoplasm. Its function is as follows. Required for pollen aperture formation, male fertility and LECRKS7/DAF1 function. Seems to be involved in operculum protrusion. Participates in the modification of plasma membrane at future aperture sites, possibly by creating close contact between the plasma membrane and callose wall to prevent primexine formation and sporopollenin deposition. The polypeptide is Protein INAPERTURATE POLLEN 1 homolog (Oryza sativa subsp. japonica (Rice)).